A 184-amino-acid polypeptide reads, in one-letter code: Tyrosine-protein kinase receptor Tie-1 (184 aa).

Residues 1-164 (QLLQFAADVA…RMQEARKAYV (164 aa)) enclose the Protein kinase domain. The active-site Proton acceptor is the Asp-25. Tyr-53 carries the phosphotyrosine; by autocatalysis modification.

The protein belongs to the protein kinase superfamily. Tyr protein kinase family. Tie subfamily. In terms of assembly, interacts with svep1. Expressed in most populations of endothelial cells in 24 hours embryos, including the endocardium.

It is found in the cell membrane. The catalysed reaction is L-tyrosyl-[protein] + ATP = O-phospho-L-tyrosyl-[protein] + ADP + H(+). Functionally, transmembrane tyrosine-protein kinase. Required for the formation of facial lymphatic structures and brain lymphatic endothelial cells. Also required for embryonic ventral and dorsal migration of parachordal lymphoblasts along the arterial intersegmental vessel. Plays a role in the embryonic formation of the dorsal longitudinal anastomotic vessel. This is Tyrosine-protein kinase receptor Tie-1 (tie1) from Danio rerio (Zebrafish).